The chain runs to 96 residues: Small ribosomal subunit protein bS6 (96 aa).

It belongs to the bacterial ribosomal protein bS6 family.

Its function is as follows. Binds together with bS18 to 16S ribosomal RNA. The sequence is that of Small ribosomal subunit protein bS6 (rpsF) from Streptomyces coelicolor (strain ATCC BAA-471 / A3(2) / M145).